Here is a 418-residue protein sequence, read N- to C-terminus: Pyruvate decarboxylase 1 (418 aa).

His-59 lines the substrate pocket. The segment at 337–418 (DSWFNCQKLK…IFLINNGGYT (82 aa)) is thiamine pyrophosphate binding. Positions 387, 414, and 416 each coordinate Mg(2+).

The protein belongs to the TPP enzyme family. As to quaternary structure, homotetramer. A metal cation is required as a cofactor. Requires thiamine diphosphate as cofactor. In terms of tissue distribution, leaves.

The catalysed reaction is a 2-oxocarboxylate + H(+) = an aldehyde + CO2. The polypeptide is Pyruvate decarboxylase 1 (PDC1) (Nicotiana tabacum (Common tobacco)).